A 214-amino-acid polypeptide reads, in one-letter code: Glutathione S-transferase F12 (214 aa).

The region spanning Val2–Gly82 is the GST N-terminal domain. Glutathione-binding positions include Ala11–Ala12, Gln40–Lys41, Gln53–Val54, and Glu66–Ser67. One can recognise a GST C-terminal domain in the interval Ser89–His214.

The protein belongs to the GST superfamily. Phi family.

The protein localises to the cytoplasm. It localises to the cytosol. The catalysed reaction is RX + glutathione = an S-substituted glutathione + a halide anion + H(+). In terms of biological role, involved in the transport and/or accumulation of both anthocyanins and proanthocyanidins (PA)s in the vacuole. Functions in the cytosol to maintain the regular accumulation in the vacuole of PA precursors, such as epicatechin and glycosylated epicatechin. The protein is Glutathione S-transferase F12 of Arabidopsis thaliana (Mouse-ear cress).